A 103-amino-acid chain; its full sequence is Small ribosomal subunit protein bS20 (103 aa).

The span at 1–20 shows a compositional bias: basic residues; it reads MATAKPKKKNPRLASGRKRV. A disordered region spans residues 1-31; sequence MATAKPKKKNPRLASGRKRVRQDTKLNAANT.

This sequence belongs to the bacterial ribosomal protein bS20 family.

Functionally, binds directly to 16S ribosomal RNA. This Polaromonas sp. (strain JS666 / ATCC BAA-500) protein is Small ribosomal subunit protein bS20.